Consider the following 435-residue polypeptide: Tubulin-like protein TubZ (435 aa).

GTP-binding positions include 25–26, 124–126, Asn-185, and Asn-209; these read MG and GTG. The disordered stretch occupies residues 403–435; sequence QEEKPKKKKLNFGAEPEAEVADDSQPTKKKLSF.

This sequence belongs to the FtsZ family. TubZ subfamily. In terms of assembly, polymerizes to form two-stranded filaments and bundles at higher concentration in the presence of GTP. Binds to the TubR-tubC protein DNA complex.

Its subcellular location is the cytoplasm. The enzyme catalyses GTP + H2O = GDP + phosphate + H(+). With respect to regulation, GTPase inhibited by GTP-gamma-S, which also stabilizes filaments. Functionally, a tubulin-like, filament forming GTPase; the motor component of the type III plasmid partition system which ensures correct segregation of the pXO1 plasmid. Essential for plasmid replication. The filaments seed from a DNA centromere-like site (tubC)-TubR complex which extends to surround the TubZ filaments. Highly dynamic filaments grow at the plus end and depolymerize at the minus end, a process called treadmilling. TubR-tubC complexes track the depolymerizing minus end of the filament, probably pulling plasmid within the cell. Has a high GTPase activity; in the presence of GTP assembles into dynamic filaments which bind almost exclusively GDP. Filament formation is cooperative, requiring a critical concentration. Formation occurs very quickly and is followed by disassembly as GTP is consumed. Small amounts of GTP-gamma-S stabilize filaments. Has high GTP and dGTPase activity, 6-fold lower ATPase activity. Forms filaments in the presence of ATP that also disassemble. Weakly binds DNA in a GTP-dependent, non-sequence-specific manner; GTP hydrolysis is not required for DNA-binding. The polypeptide is Tubulin-like protein TubZ (Bacillus anthracis).